Here is a 292-residue protein sequence, read N- to C-terminus: Shikimate dehydrogenase (NADP(+)) (292 aa).

Residues 22 to 24 (SLS) and Ser69 each bind shikimate. Lys73 acts as the Proton acceptor in catalysis. Positions 94 and 111 each coordinate shikimate. NADP(+) is bound by residues 135-139 (GVGGA) and Ile236. Tyr238 contacts shikimate. Gly260 is an NADP(+) binding site.

Belongs to the shikimate dehydrogenase family. As to quaternary structure, homodimer.

It carries out the reaction shikimate + NADP(+) = 3-dehydroshikimate + NADPH + H(+). Its pathway is metabolic intermediate biosynthesis; chorismate biosynthesis; chorismate from D-erythrose 4-phosphate and phosphoenolpyruvate: step 4/7. Involved in the biosynthesis of the chorismate, which leads to the biosynthesis of aromatic amino acids. Catalyzes the reversible NADPH linked reduction of 3-dehydroshikimate (DHSA) to yield shikimate (SA). The polypeptide is Shikimate dehydrogenase (NADP(+)) (Streptococcus pyogenes serotype M3 (strain ATCC BAA-595 / MGAS315)).